The sequence spans 318 residues: Porphobilinogen deaminase (318 aa).

At cysteine 241 the chain carries S-(dipyrrolylmethanemethyl)cysteine.

Belongs to the HMBS family. As to quaternary structure, monomer. The cofactor is dipyrromethane.

The catalysed reaction is 4 porphobilinogen + H2O = hydroxymethylbilane + 4 NH4(+). The protein operates within porphyrin-containing compound metabolism; protoporphyrin-IX biosynthesis; coproporphyrinogen-III from 5-aminolevulinate: step 2/4. In terms of biological role, tetrapolymerization of the monopyrrole PBG into the hydroxymethylbilane pre-uroporphyrinogen in several discrete steps. The protein is Porphobilinogen deaminase of Geotalea uraniireducens (strain Rf4) (Geobacter uraniireducens).